Consider the following 218-residue polypeptide: Ras-related protein RabO (218 aa).

Position 15–22 (15–22 (GDYCVGKT)) interacts with GTP. The Effector region motif lies at 37–45 (RNCNIGVDF). Residues 63 to 67 (DTGGQ) and 122 to 125 (NKID) each bind GTP. Position 215 is a cysteine methyl ester (C215). C215 carries the S-geranylgeranyl cysteine lipid modification. A propeptide spans 216–218 (FIL) (removed in mature form).

Belongs to the small GTPase superfamily. Rab family.

Its subcellular location is the cell membrane. In Dictyostelium discoideum (Social amoeba), this protein is Ras-related protein RabO (rabO).